A 91-amino-acid polypeptide reads, in one-letter code: Putative septation protein SpoVG (91 aa).

The protein belongs to the SpoVG family.

Could be involved in septation. This Caldanaerobacter subterraneus subsp. tengcongensis (strain DSM 15242 / JCM 11007 / NBRC 100824 / MB4) (Thermoanaerobacter tengcongensis) protein is Putative septation protein SpoVG.